A 457-amino-acid polypeptide reads, in one-letter code: MAASVEHDSLESMEAPQTAVEVEETKTFKDLGVTDVLCEACDQLGWTKPTKIQIEAIPLALQGRDIIGLAETGSGKTGAFALPILNALLETPQRLFALVLTPTRELAFQISEQFEALGSSIGVQCAVIVGGIDSMSQSLALAKKPHIVIATPGRLIDHLENTKGFNLRALKYLVMDEADRILNMDFETEVDKILKVIPRDRKTFLFSATMTKKVQKLQRAALKNPVKCAVSSKYQTVEKLQQYYLFIPSKFKDTYLVYILNELAGNSFMIFCSTCNNTQRTALLLRNLGFTAIPLHGQMSQSKRLGSLNKFKAKARSILLATDVASRGLDIPHVDVVVNFDIPTHSKDYIHRVGRTARAGRSGKAITFVTQYDVELFQRIEHLIGKKLPVFPTQDDEVMMLTERVTEAQRFARMELREHGEKKKRSREDVGDNDDTEGAIGVRNKVAGGKMKKRKGR.

An N-acetylalanine modification is found at A2. Phosphoserine is present on S9. The Q motif signature appears at 26–54 (KTFKDLGVTDVLCEACDQLGWTKPTKIQI). Residues 57-228 (IPLALQGRDI…RAALKNPVKC (172 aa)) enclose the Helicase ATP-binding domain. 70–77 (AETGSGKT) is an ATP binding site. The residue at position 151 (T151) is a Phosphothreonine. The DEAD box motif lies at 176 to 179 (DEAD). One can recognise a Helicase C-terminal domain in the interval 239–399 (KLQQYYLFIP…VFPTQDDEVM (161 aa)). Residues 415–430 (ELREHGEKKKRSREDV) are compositionally biased toward basic and acidic residues. A disordered region spans residues 415-457 (ELREHGEKKKRSREDVGDNDDTEGAIGVRNKVAGGKMKKRKGR). S426 is subject to Phosphoserine.

It belongs to the DEAD box helicase family. DDX47/RRP3 subfamily. In terms of assembly, interacts with AGO1 and AGO2. Interacts with GABARAP. Interacts with NOL8; the interaction is RNA-dependent.

It is found in the nucleus. The protein resides in the nucleolus. It carries out the reaction ATP + H2O = ADP + phosphate + H(+). Its function is as follows. Involved in apoptosis. May have a role in rRNA processing and mRNA splicing. Associates with pre-rRNA precursors. The chain is Probable ATP-dependent RNA helicase DDX47 (DDX47) from Bos taurus (Bovine).